Here is a 754-residue protein sequence, read N- to C-terminus: Glutathione biosynthesis bifunctional protein GshAB (754 aa).

The interval 1 to 333 (MHINQLLQHA…KAQKLNDKIA (333 aa)) is glutamate--cysteine ligase. In terms of domain architecture, ATP-grasp spans 489 to 752 (KKILRENGYP…LAKLFPEIST (264 aa)). 516–574 (SQIKNKPIVVKPKTTNFGLGISIFETAASHNDYEKALDIAFIEDYSVLVEEFIPGTEYR) contributes to the ATP binding site. 3 residues coordinate Mg(2+): Asp-696, Glu-717, and Asn-719. Mn(2+) contacts are provided by Asp-696, Glu-717, and Asn-719.

The protein in the N-terminal section; belongs to the glutamate--cysteine ligase type 1 family. Type 2 subfamily. Monomer. Mg(2+) serves as cofactor. Mn(2+) is required as a cofactor.

It carries out the reaction L-cysteine + L-glutamate + ATP = gamma-L-glutamyl-L-cysteine + ADP + phosphate + H(+). It catalyses the reaction gamma-L-glutamyl-L-cysteine + glycine + ATP = glutathione + ADP + phosphate + H(+). It functions in the pathway sulfur metabolism; glutathione biosynthesis; glutathione from L-cysteine and L-glutamate: step 1/2. The protein operates within sulfur metabolism; glutathione biosynthesis; glutathione from L-cysteine and L-glutamate: step 2/2. Its function is as follows. Synthesizes glutathione from L-glutamate and L-cysteine via gamma-L-glutamyl-L-cysteine. This is Glutathione biosynthesis bifunctional protein GshAB from Streptococcus mutans serotype c (strain ATCC 700610 / UA159).